The chain runs to 1013 residues: Chitin synthase A (1013 aa).

N10 is a glycosylation site (N-linked (GlcNAc...) asparagine). Disordered regions lie at residues 26 to 83 (RYSY…AADW) and 95 to 218 (ERAD…RRGV). Residues 64–81 (TASRPASPARPWSPTRAA) are compositionally biased toward low complexity. Residues 154–173 (TISSRHGPQGSVQSFTSEST) show a composition bias toward polar residues. N-linked (GlcNAc...) asparagine glycans are attached at residues N194 and N316. 5 consecutive transmembrane segments (helical) span residues 646 to 666 (LLQL…FFFI), 686 to 706 (IFIV…IFSM), 721 to 741 (MIVY…LIVL), 759 to 779 (LFVN…FTSF), and 792 to 811 (AQYF…YAFC). N-linked (GlcNAc...) asparagine glycosylation is present at N837. 2 helical membrane-spanning segments follow: residues 892–912 (VSVW…VYGV) and 919–939 (VYLA…AIGS). N-linked (GlcNAc...) asparagine glycans are attached at residues N967, N980, N989, and N995.

It belongs to the chitin synthase family. Class II subfamily. Mainly expressed in the metulae, phialides, and conidia.

Its subcellular location is the cell membrane. It localises to the cell septum. It carries out the reaction [(1-&gt;4)-N-acetyl-beta-D-glucosaminyl](n) + UDP-N-acetyl-alpha-D-glucosamine = [(1-&gt;4)-N-acetyl-beta-D-glucosaminyl](n+1) + UDP + H(+). Functionally, polymerizes chitin, a structural polymer of the cell wall and septum, by transferring the sugar moiety of UDP-GlcNAc to the non-reducing end of the growing chitin polymer. Seems not to be involved in hyphal growth, but, with chsC, chsA shares critical functions in hyphal wall integrity and differentiation. ChsA and chsC share also overlapping roles in septum formation. Invoved in the production of the asexual spores (conidia) that are formed by differentiated aerial hyphae called conidiophores. In Emericella nidulans (strain FGSC A4 / ATCC 38163 / CBS 112.46 / NRRL 194 / M139) (Aspergillus nidulans), this protein is Chitin synthase A.